The following is a 383-amino-acid chain: UDP-N-acetylglucosamine--N-acetylmuramyl-(pentapeptide) pyrophosphoryl-undecaprenol N-acetylglucosamine transferase (383 aa).

Residues 11 to 13 (TGG), N125, R166, S191, I246, and Q291 contribute to the UDP-N-acetyl-alpha-D-glucosamine site. The interval 364–383 (PNGRERTPIEAEKKAPRSNS) is disordered. Residues 366-383 (GRERTPIEAEKKAPRSNS) are compositionally biased toward basic and acidic residues.

The protein belongs to the glycosyltransferase 28 family. MurG subfamily.

The protein resides in the cell inner membrane. It catalyses the reaction di-trans,octa-cis-undecaprenyl diphospho-N-acetyl-alpha-D-muramoyl-L-alanyl-D-glutamyl-meso-2,6-diaminopimeloyl-D-alanyl-D-alanine + UDP-N-acetyl-alpha-D-glucosamine = di-trans,octa-cis-undecaprenyl diphospho-[N-acetyl-alpha-D-glucosaminyl-(1-&gt;4)]-N-acetyl-alpha-D-muramoyl-L-alanyl-D-glutamyl-meso-2,6-diaminopimeloyl-D-alanyl-D-alanine + UDP + H(+). The protein operates within cell wall biogenesis; peptidoglycan biosynthesis. In terms of biological role, cell wall formation. Catalyzes the transfer of a GlcNAc subunit on undecaprenyl-pyrophosphoryl-MurNAc-pentapeptide (lipid intermediate I) to form undecaprenyl-pyrophosphoryl-MurNAc-(pentapeptide)GlcNAc (lipid intermediate II). The polypeptide is UDP-N-acetylglucosamine--N-acetylmuramyl-(pentapeptide) pyrophosphoryl-undecaprenol N-acetylglucosamine transferase (Myxococcus xanthus (strain DK1622)).